A 936-amino-acid chain; its full sequence is Protein SIEL (936 aa).

Interacts with SHR, MGP, SCR, JKD, CPC, TMO7 and AGL21, but not with LFY or STM.

The protein localises to the nucleus. Its subcellular location is the endosome. It is found in the cytoplasm. It localises to the cell cortex. In terms of biological role, intracellular shuttle that promotes movement of SHR from the stele into the endodermis. Required for SHR association to endosomes and localization, and for intercellular movement of SHR. This is Protein SIEL from Arabidopsis thaliana (Mouse-ear cress).